We begin with the raw amino-acid sequence, 514 residues long: Peptide chain release factor 3 (514 aa).

The tr-type G domain occupies 8–268 (KKRRTFAIIS…IFLKFAPEPH (261 aa)). GTP-binding positions include 17–24 (SHPDAGKT), 85–89 (DTPGH), and 139–142 (NKLD).

It belongs to the TRAFAC class translation factor GTPase superfamily. Classic translation factor GTPase family. PrfC subfamily.

Its subcellular location is the cytoplasm. Functionally, increases the formation of ribosomal termination complexes and stimulates activities of RF-1 and RF-2. It binds guanine nucleotides and has strong preference for UGA stop codons. It may interact directly with the ribosome. The stimulation of RF-1 and RF-2 is significantly reduced by GTP and GDP, but not by GMP. The sequence is that of Peptide chain release factor 3 from Streptococcus pneumoniae serotype 2 (strain D39 / NCTC 7466).